The following is a 393-amino-acid chain: NAD(P)H-quinone oxidoreductase subunit H, chloroplastic (393 aa).

The protein belongs to the complex I 49 kDa subunit family. As to quaternary structure, NDH is composed of at least 16 different subunits, 5 of which are encoded in the nucleus.

The protein resides in the plastid. The protein localises to the chloroplast thylakoid membrane. The catalysed reaction is a plastoquinone + NADH + (n+1) H(+)(in) = a plastoquinol + NAD(+) + n H(+)(out). The enzyme catalyses a plastoquinone + NADPH + (n+1) H(+)(in) = a plastoquinol + NADP(+) + n H(+)(out). In terms of biological role, NDH shuttles electrons from NAD(P)H:plastoquinone, via FMN and iron-sulfur (Fe-S) centers, to quinones in the photosynthetic chain and possibly in a chloroplast respiratory chain. The immediate electron acceptor for the enzyme in this species is believed to be plastoquinone. Couples the redox reaction to proton translocation, and thus conserves the redox energy in a proton gradient. This is NAD(P)H-quinone oxidoreductase subunit H, chloroplastic from Helianthus annuus (Common sunflower).